Consider the following 472-residue polypeptide: Eukaryotic translation initiation factor 2 subunit 3 (472 aa).

At A2 the chain carries N-acetylalanine. S16 carries the post-translational modification Phosphoserine. Residues 39 to 248 (QATINIGTIG…IVKKIPVPPR (210 aa)) form the tr-type G domain. Residues 48-55 (GHVAHGKS) form a G1 region. 51–56 (AHGKST) is a binding site for GTP. The tract at residues 76-80 (NITIK) is G2. Residues 134–137 (DCPG) are G3. GTP contacts are provided by residues 190 to 193 (NKID) and 225 to 227 (SAQ). The G4 stretch occupies residues 190-193 (NKID). The G5 stretch occupies residues 225-227 (SAQ). Positions 457 to 469 (GQIRRGVTIKPTV) are interacts with CDC123.

It belongs to the TRAFAC class translation factor GTPase superfamily. Classic translation factor GTPase family. EIF2G subfamily. As to quaternary structure, eukaryotic translation initiation factor 2 eIF2 is a heterotrimeric complex composed of an alpha (EIF2S1), a beta (EIF2S2) and a gamma (EIF2S3) chain. eIF2 is member of the 43S pre-initiation complex (43S PIC). Interacts (via C-terminus) with CDC123; the interaction is direct.

It localises to the cytoplasm. Its subcellular location is the cytosol. The catalysed reaction is GTP + H2O = GDP + phosphate + H(+). Its function is as follows. Member of the eIF2 complex that functions in the early steps of protein synthesis by forming a ternary complex with GTP and initiator tRNA. This complex binds to a 40S ribosomal subunit, followed by mRNA binding to form the 43S pre-initiation complex (43S PIC). Junction of the 60S ribosomal subunit to form the 80S initiation complex is preceded by hydrolysis of the GTP bound to eIF2 and release of an eIF2-GDP binary complex. In order for eIF2 to recycle and catalyze another round of initiation, the GDP bound to eIF2 must exchange with GTP by way of a reaction catalyzed by eIF-2B. This chain is Eukaryotic translation initiation factor 2 subunit 3 (EIF2S3), found in Sus scrofa (Pig).